Here is a 103-residue protein sequence, read N- to C-terminus: Small ribosomal subunit protein uS10 (103 aa).

The protein belongs to the universal ribosomal protein uS10 family. In terms of assembly, part of the 30S ribosomal subunit.

In terms of biological role, involved in the binding of tRNA to the ribosomes. The chain is Small ribosomal subunit protein uS10 from Hahella chejuensis (strain KCTC 2396).